The chain runs to 100 residues: NADH-quinone oxidoreductase subunit K (100 aa).

Transmembrane regions (helical) follow at residues 4–24 (TSYY…GVLL), 29–49 (IVVF…LVAF), and 60–80 (VIVF…LALL).

The protein belongs to the complex I subunit 4L family. As to quaternary structure, NDH-1 is composed of 14 different subunits. Subunits NuoA, H, J, K, L, M, N constitute the membrane sector of the complex.

The protein localises to the cell membrane. The enzyme catalyses a quinone + NADH + 5 H(+)(in) = a quinol + NAD(+) + 4 H(+)(out). NDH-1 shuttles electrons from NADH, via FMN and iron-sulfur (Fe-S) centers, to quinones in the respiratory chain. The immediate electron acceptor for the enzyme in this species is believed to be ubiquinone. Couples the redox reaction to proton translocation (for every two electrons transferred, four hydrogen ions are translocated across the cytoplasmic membrane), and thus conserves the redox energy in a proton gradient. This is NADH-quinone oxidoreductase subunit K from Chloroflexus aurantiacus (strain ATCC 29366 / DSM 635 / J-10-fl).